The following is a 185-amino-acid chain: Capsid protein (185 aa).

A disordered region spans residues 136–185 (NAPILSTLPETTVVRRRDRGRSPRRRTPSPRRRRSQSPRRRRSQSRESQC). Over residues 149-178 (VRRRDRGRSPRRRTPSPRRRRSQSPRRRRS) the composition is skewed to basic residues. S157, S164, and S172 each carry phosphoserine; by host. The stretch at 157–163 (SPRRRTP) is one 1; half-length repeat. Positions 157 to 179 (SPRRRTPSPRRRRSQSPRRRRSQ) are 3 X 8 AA repeats of S-P-R-R-R-[PR]-S-Q. The Bipartite nuclear localization signal signature appears at 160-177 (RRTPSPRRRRSQSPRRRR). 2 tandem repeats follow at residues 164–171 (SPRRRRSQ) and 172–179 (SPRRRRSQ). An RNA binding region spans residues 179–185 (QSRESQC).

This sequence belongs to the orthohepadnavirus core antigen family. In terms of assembly, homodimerizes, then multimerizes. Interacts with cytosol exposed regions of viral L glycoprotein present in the reticulum-to-Golgi compartment. Interacts with human FLNB. Phosphorylated form interacts with host importin alpha; this interaction depends on the exposure of the NLS, which itself depends upon genome maturation and/or phosphorylation of the capsid protein. Interacts with host NUP153. In terms of processing, phosphorylated by host SRPK1, SRPK2, and maybe protein kinase C or GAPDH. Phosphorylation is critical for pregenomic RNA packaging. Protein kinase C phosphorylation is stimulated by HBx protein and may play a role in transport of the viral genome to the nucleus at the late step during the viral replication cycle.

The protein localises to the virion. It is found in the host cytoplasm. Its function is as follows. Self assembles to form an icosahedral capsid. Most capsids appear to be large particles with an icosahedral symmetry of T=4 and consist of 240 copies of capsid protein, though a fraction forms smaller T=3 particles consisting of 180 capsid proteins. Entering capsids are transported along microtubules to the nucleus. Phosphorylation of the capsid is thought to induce exposure of nuclear localization signal in the C-terminal portion of the capsid protein that allows binding to the nuclear pore complex via the importin (karyopherin-) alpha and beta. Capsids are imported in intact form through the nuclear pore into the nuclear basket, where it probably binds NUP153. Only capsids that contain the mature viral genome can release the viral DNA and capsid protein into the nucleoplasm. Immature capsids get stuck in the basket. Capsids encapsulate the pre-genomic RNA and the P protein. Pre-genomic RNA is reverse-transcribed into DNA while the capsid is still in the cytoplasm. The capsid can then either be directed to the nucleus, providing more genomes for transcription, or bud through the endoplasmic reticulum to provide new virions. In Homo sapiens (Human), this protein is Capsid protein.